The following is a 429-amino-acid chain: Adenylosuccinate synthetase (429 aa).

GTP is bound by residues 13 to 19 and 41 to 43; these read GDEGKGK and GHT. The active-site Proton acceptor is the D14. Positions 14 and 41 each coordinate Mg(2+). IMP contacts are provided by residues 14 to 17, 39 to 42, T130, R144, Q224, T239, and R303; these read DEGK and NAGH. The active-site Proton donor is H42. Residue 299-305 coordinates substrate; it reads ATTGRAR. GTP contacts are provided by residues R305, 331–333, and 412–414; these read KLD and STG.

Belongs to the adenylosuccinate synthetase family. Homodimer. The cofactor is Mg(2+).

It is found in the cytoplasm. It catalyses the reaction IMP + L-aspartate + GTP = N(6)-(1,2-dicarboxyethyl)-AMP + GDP + phosphate + 2 H(+). The protein operates within purine metabolism; AMP biosynthesis via de novo pathway; AMP from IMP: step 1/2. Functionally, plays an important role in the de novo pathway of purine nucleotide biosynthesis. Catalyzes the first committed step in the biosynthesis of AMP from IMP. The chain is Adenylosuccinate synthetase from Psychrobacter sp. (strain PRwf-1).